Consider the following 407-residue polypeptide: Na(+)-translocating NADH-quinone reductase subunit F (407 aa).

A helical membrane pass occupies residues 3–23; it reads IILGVVMFTLIVLALVLVILF. The region spanning 32–126 is the 2Fe-2S ferredoxin-type domain; it reads GDITISVNDD…DMDIELPEEI (95 aa). [2Fe-2S] cluster is bound by residues C69, C75, C78, and C110. In terms of domain architecture, FAD-binding FR-type spans 129-269; that stretch reads VKKWECTVIS…SGPFGEFFAK (141 aa). The interval 272–389 is catalytic; sequence DAEMVFVGGG…PMMNAAVIGM (118 aa).

The protein belongs to the NqrF family. As to quaternary structure, composed of six subunits; NqrA, NqrB, NqrC, NqrD, NqrE and NqrF. [2Fe-2S] cluster is required as a cofactor. FAD serves as cofactor.

The protein localises to the cell inner membrane. It catalyses the reaction a ubiquinone + n Na(+)(in) + NADH + H(+) = a ubiquinol + n Na(+)(out) + NAD(+). NQR complex catalyzes the reduction of ubiquinone-1 to ubiquinol by two successive reactions, coupled with the transport of Na(+) ions from the cytoplasm to the periplasm. The first step is catalyzed by NqrF, which accepts electrons from NADH and reduces ubiquinone-1 to ubisemiquinone by a one-electron transfer pathway. The sequence is that of Na(+)-translocating NADH-quinone reductase subunit F from Vibrio campbellii (strain ATCC BAA-1116).